Here is a 1165-residue protein sequence, read N- to C-terminus: Leptin receptor (1165 aa).

The signal sequence occupies residues 1–21; the sequence is MICQKFCVVLLHWEFIYVITA. Over 22–839 the chain is Extracellular; the sequence is FNLSYPITPW…QDDIEKHQSD (818 aa). 6 N-linked (GlcNAc...) asparagine glycosylation sites follow: N23, N41, N56, N73, N81, and N98. 5 cysteine pairs are disulfide-bonded: C37–C90, C89–C99, C131–C142, C186–C196, and C188–C193. N187 is a glycosylation site (N-linked (GlcNAc...) asparagine). Residues N206, N276, N347, and N397 are each glycosylated (N-linked (GlcNAc...) asparagine). Positions 239–333 constitute a Fibronectin type-III 1 domain; that stretch reads PPLGLHMEIT…TPRVFTTQDV (95 aa). The Ig-like domain occupies 331–429; that stretch reads QDVIYFPPKI…HRYAELYVID (99 aa). Cystine bridges form between C352–C412, C413–C418, C436–C447, C473–C528, and C488–C498. The segment at 467–484 is leptin-binding; sequence HRSSLYCSDIPSIHPISE. N-linked (GlcNAc...) asparagine glycosylation is found at N516, N624, N659, N688, N697, N728, and N750. 3 Fibronectin type-III domains span residues 539-634, 639-732, and 740-833; these read PPSS…TVVM, PMRG…LTFS, and IVQS…QDDI. The WSXWS motif motif lies at 622–626; it reads WSNWS. A helical membrane pass occupies residues 840–862; it reads AGLYVIVPVIISSSILLLGTLLI. Over 863–1165 the chain is Cytoplasmic; the sequence is SHQRMKKLFW…MENKMCDLTV (303 aa). A Box 1 motif motif is present at residues 871 to 879; sequence FWEDVPNPK. S882 carries the phosphoserine modification. Residues 893-898 are required for JAK2 activation; that stretch reads ETFEHL. The segment at 898–906 is required for STAT3 phosphorylation; sequence LFIKHTASV. Residue Y986 is modified to Phosphotyrosine; by JAK2. Y1079 carries the phosphotyrosine modification. Residue Y1141 is modified to Phosphotyrosine; by JAK2.

The protein belongs to the type I cytokine receptor family. Type 2 subfamily. As to quaternary structure, present as a mixture of monomers and dimers. The phosphorylated receptor binds a number of SH2 domain-containing proteins such as JAK2, STAT3, PTPN11, and SOCS3. Interaction with SOCS3 inhibits JAK/STAT signaling and MAPK cascade. In terms of processing, on ligand binding, phosphorylated on two conserved C-terminal tyrosine residues (isoform B only) by JAK2. Tyr-986 is required for complete binding and activation of PTPN11, ERK/FOS activation,for interaction with SOCS3 and SOCS3 mediated inhibition of leptin signaling. Phosphorylation on Tyr-1141 is required for STAT3 binding/activation. Phosphorylation of Tyr-1079 has a more accessory role. As to expression, isoform A is expressed in fetal liver and in hematopoietic tissues and choroid plexus. In adults highest expression in heart, liver, small intestine, prostate and ovary. Low level in lung and kidney. Isoform B is highly expressed in hypothalamus, but also in skeletal muscle. Detected in fundic and antral epithelial cells of the gastric mucosa. Isoform B and isoform A are expressed by NK cells (at protein level).

The protein resides in the cell membrane. It is found in the basolateral cell membrane. The protein localises to the secreted. Functionally, receptor for hormone LEP/leptin. On ligand binding, mediates LEP central and peripheral effects through the activation of different signaling pathways such as JAK2/STAT3 and MAPK cascade/FOS. In the hypothalamus, LEP acts as an appetite-regulating factor that induces a decrease in food intake and an increase in energy consumption by inducing anorexinogenic factors and suppressing orexigenic neuropeptides, also regulates bone mass and secretion of hypothalamo-pituitary-adrenal hormones. In the periphery, increases basal metabolism, influences reproductive function, regulates pancreatic beta-cell function and insulin secretion, is pro-angiogenic and affects innate and adaptive immunity. Control of energy homeostasis and melanocortin production (stimulation of POMC and full repression of AgRP transcription) is mediated by STAT3 signaling, whereas distinct signals regulate NPY and the control of fertility, growth and glucose homeostasis. Involved in the regulation of counter-regulatory response to hypoglycemia by inhibiting neurons of the parabrachial nucleus. Has a specific effect on T lymphocyte responses, differentially regulating the proliferation of naive and memory T -ells. Leptin increases Th1 and suppresses Th2 cytokine production. May transport LEP across the blood-brain barrier. Binds LEP and mediates LEP endocytosis. Does not induce phosphorylation of and activate STAT3. In terms of biological role, antagonizes Isoform A and isoform B-mediated LEP binding and endocytosis. The protein is Leptin receptor (LEPR) of Homo sapiens (Human).